Reading from the N-terminus, the 320-residue chain is Iminosuccinate reductase (320 aa).

The Proton donor/acceptor role is filled by K67. NAD(+)-binding positions include R110, 137–138 (HQ), N159, S199, 219–222 (MGTD), K226, and G291.

This sequence belongs to the ornithine cyclodeaminase/mu-crystallin family. BhcD subfamily.

It catalyses the reaction L-aspartate + NAD(+) = iminosuccinate + NADH + H(+). Functionally, imine reductase that catalyzes the NADH-dependent reduction of iminosuccinate to L-aspartate. Is essential for the growth of P.denitrificans in the presence of glycolate and glyoxylate since it functions in glyoxylate assimilation via the beta-hydroxyaspartate cycle (BHAC). Thereby BhcD regenerates the amino group donor for the first step of the BHAC. The sequence is that of Iminosuccinate reductase from Paracoccus denitrificans (strain Pd 1222).